The chain runs to 156 residues: Mediator of RNA polymerase II transcription subunit 28 (156 aa).

The disordered stretch occupies residues 1–38 (MDYQQKPPQSSDPSPSPPDRPPGIRSPETPSNNQNNDI). Residues 104 to 156 (PSRAESLKKDIAVMEEELKTKDELIKKHMRLFQESQKLVKEQIEKHRDELEKV) adopt a coiled-coil conformation.

The protein belongs to the Mediator complex subunit 28 family. In terms of assembly, dimers. Component of the Mediator complex. Interacts with GEBPL.

It localises to the nucleus. Its function is as follows. Component of the Mediator complex, a coactivator involved in the regulated transcription of nearly all RNA polymerase II-dependent genes. Mediator functions as a bridge to convey information from gene-specific regulatory proteins to the basal RNA polymerase II transcription machinery. The Mediator complex, having a compact conformation in its free form, is recruited to promoters by direct interactions with regulatory proteins and serves for the assembly of a functional pre-initiation complex with RNA polymerase II and the general transcription factors. This chain is Mediator of RNA polymerase II transcription subunit 28, found in Arabidopsis thaliana (Mouse-ear cress).